We begin with the raw amino-acid sequence, 275 residues long: Dermonecrotic toxin LarSicTox-alphaIII1 (275 aa).

Histidine 5 is an active-site residue. Residues glutamate 25 and aspartate 27 each contribute to the Mg(2+) site. Histidine 41 acts as the Nucleophile in catalysis. Disulfide bonds link cysteine 45–cysteine 51 and cysteine 47–cysteine 190. Aspartate 85 is a Mg(2+) binding site. The N-linked (GlcNAc...) asparagine glycan is linked to asparagine 252.

This sequence belongs to the arthropod phospholipase D family. Class II subfamily. The cofactor is Mg(2+). Expressed by the venom gland.

The protein localises to the secreted. It carries out the reaction an N-(acyl)-sphingosylphosphocholine = an N-(acyl)-sphingosyl-1,3-cyclic phosphate + choline. The enzyme catalyses an N-(acyl)-sphingosylphosphoethanolamine = an N-(acyl)-sphingosyl-1,3-cyclic phosphate + ethanolamine. It catalyses the reaction a 1-acyl-sn-glycero-3-phosphocholine = a 1-acyl-sn-glycero-2,3-cyclic phosphate + choline. The catalysed reaction is a 1-acyl-sn-glycero-3-phosphoethanolamine = a 1-acyl-sn-glycero-2,3-cyclic phosphate + ethanolamine. Functionally, dermonecrotic toxins cleave the phosphodiester linkage between the phosphate and headgroup of certain phospholipids (sphingolipid and lysolipid substrates), forming an alcohol (often choline) and a cyclic phosphate. This toxin acts on sphingomyelin (SM). It may also act on ceramide phosphoethanolamine (CPE), lysophosphatidylcholine (LPC) and lysophosphatidylethanolamine (LPE), but not on lysophosphatidylserine (LPS), and lysophosphatidylglycerol (LPG). It acts by transphosphatidylation, releasing exclusively cyclic phosphate products as second products. Induces dermonecrosis, hemolysis, increased vascular permeability, edema, inflammatory response, and platelet aggregation. In Loxosceles arizonica (Arizona brown spider), this protein is Dermonecrotic toxin LarSicTox-alphaIII1.